A 549-amino-acid chain; its full sequence is Cytoplasmic trehalase (549 aa).

Substrate-binding positions include arginine 168, 175–176 (WD), asparagine 212, 221–223 (RSQ), 292–294 (RDE), and glycine 324. Residues aspartate 326 and glutamate 509 each act as proton donor/acceptor in the active site. Glutamate 525 lines the substrate pocket.

This sequence belongs to the glycosyl hydrolase 37 family. In terms of assembly, monomer.

It localises to the cytoplasm. It catalyses the reaction alpha,alpha-trehalose + H2O = alpha-D-glucose + beta-D-glucose. Its pathway is glycan degradation; trehalose degradation; D-glucose from alpha,alpha-trehalose: step 1/1. Its function is as follows. Hydrolyzes trehalose to glucose. Could be involved, in cells returning to low osmolarity conditions, in the utilization of the accumulated cytoplasmic trehalose, which was synthesized in response to high osmolarity. The chain is Cytoplasmic trehalase from Escherichia coli O127:H6 (strain E2348/69 / EPEC).